We begin with the raw amino-acid sequence, 163 residues long: UPF0763 protein C8J_0930 (163 aa).

Belongs to the UPF0763 family.

This is UPF0763 protein C8J_0930 from Campylobacter jejuni subsp. jejuni serotype O:6 (strain 81116 / NCTC 11828).